Here is a 75-residue protein sequence, read N- to C-terminus: Peptide Ctri9610 (75 aa).

Residues 1-22 form the signal peptide; it reads MNSKYLFVFLILNVIFIDLCQG. A Lysine amide modification is found at K41. Positions 42-75 are excised as a propeptide; the sequence is GTRRRELGSQYDYLQDFRKRELDLDDLLSKFPDY.

It belongs to the non-disulfide-bridged peptide (NDBP) superfamily. Short antimicrobial peptide (group 4) family. As to expression, expressed by the venom gland.

It is found in the secreted. This chain is Peptide Ctri9610, found in Chaerilus tricostatus (Scorpion).